The following is a 424-amino-acid chain: Zinc metalloproteinase-disintegrin-like brevilysin H2a (424 aa).

Position 1 is a pyrrolidone carboxylic acid (Gln-1). Residues Arg-9–Pro-207 form the Peptidase M12B domain. Asn-69 is a glycosylation site (N-linked (GlcNAc...) asparagine). Asp-96 contacts Ca(2+). Cystine bridges form between Cys-120/Cys-202, Cys-164/Cys-186, and Cys-166/Cys-169. Zn(2+) is bound at residue His-145. Residue Glu-146 is part of the active site. Residues His-149 and His-155 each contribute to the Zn(2+) site. N-linked (GlcNAc...) asparagine glycosylation occurs at Asn-185. Residues Cys-202, Asn-205, Val-217, Asn-220, Leu-222, Glu-224, Glu-227, and Asp-230 each contribute to the Ca(2+) site. The Disintegrin domain maps to Pro-215–Asn-301. 14 disulfide bridges follow: Cys-218-Cys-247, Cys-229-Cys-242, Cys-231-Cys-237, Cys-241-Cys-264, Cys-255-Cys-261, Cys-260-Cys-286, Cys-273-Cys-293, Cys-280-Cys-312, Cys-305-Cys-317, Cys-324-Cys-374, Cys-339-Cys-385, Cys-352-Cys-362, Cys-369-Cys-411, and Cys-405-Cys-417. Residues Asp-279–Asp-281 carry the D/ECD-tripeptide motif. Ca(2+) contacts are provided by Asp-281, Glu-284, and Asp-296. An N-linked (GlcNAc...) asparagine glycan is attached at Asn-331.

This sequence belongs to the venom metalloproteinase (M12B) family. P-III subfamily. P-IIIa sub-subfamily. As to quaternary structure, monomer. Zn(2+) is required as a cofactor. Post-translationally, glycosylated. As to expression, expressed by the venom gland.

It localises to the secreted. Its proteolytic activity is inhibited by EDTA, TPEN, 1,10-phenanthroline, and some thiol compounds, but is enhanced by alkaline earth metal ions (Mg2+, Ca2+, Sr2+, and Ba2+). Its activity is not modulated by urea (4 M). Its function is as follows. Non-hemorrhagic metalloproteinase that degrades fibrinogen. The alpha chain (FGA) is rapidly degraded, the beta chain (FGB) is degraded very slowly, while the gamma chain is left intact. Shows a prefential cleavage at X-Leu bonds. Cleaves insulin B chain at '29-His-|-Leu-30', '33-Ser-|-His-34', '38-Ala-|-Leu-39' and '40-Tyr-|-Leu-41' bonds. This Gloydius brevicauda (Korean slamosa snake) protein is Zinc metalloproteinase-disintegrin-like brevilysin H2a.